A 322-amino-acid chain; its full sequence is UDP-N-acetylenolpyruvoylglucosamine reductase (322 aa).

The FAD-binding PCMH-type domain maps to 36–202; sequence RAGGPAQVLF…TSVLFEGVPG (167 aa). Arg182 is an active-site residue. Ser231 (proton donor) is an active-site residue. Residue Glu301 is part of the active site.

It belongs to the MurB family. Requires FAD as cofactor.

It localises to the cytoplasm. The enzyme catalyses UDP-N-acetyl-alpha-D-muramate + NADP(+) = UDP-N-acetyl-3-O-(1-carboxyvinyl)-alpha-D-glucosamine + NADPH + H(+). It participates in cell wall biogenesis; peptidoglycan biosynthesis. In terms of biological role, cell wall formation. In Brucella suis (strain ATCC 23445 / NCTC 10510), this protein is UDP-N-acetylenolpyruvoylglucosamine reductase.